We begin with the raw amino-acid sequence, 468 residues long: Protein CA_C1420 (468 aa).

Residues 1–289 (MSLNGFYLLP…LKELERIRKD (289 aa)) are unknown. An AMMECR1 domain is found at 296 to 468 (QEKDPYVKLA…KFMVTRHKES (173 aa)).

The polypeptide is Protein CA_C1420 (Clostridium acetobutylicum (strain ATCC 824 / DSM 792 / JCM 1419 / IAM 19013 / LMG 5710 / NBRC 13948 / NRRL B-527 / VKM B-1787 / 2291 / W)).